Consider the following 89-residue polypeptide: MSLGIMTIKETILKYGKNEKNTGKTDVQIALLTNQINHLQLHFSQHKKDHCSRRGLLKMVSKRRKLLNYLKKKNISCYTKLIESLNLRR.

Belongs to the universal ribosomal protein uS15 family. Part of the 30S ribosomal subunit. Forms a bridge to the 50S subunit in the 70S ribosome, contacting the 23S rRNA.

Functionally, one of the primary rRNA binding proteins, it binds directly to 16S rRNA where it helps nucleate assembly of the platform of the 30S subunit by binding and bridging several RNA helices of the 16S rRNA. Forms an intersubunit bridge (bridge B4) with the 23S rRNA of the 50S subunit in the ribosome. The sequence is that of Small ribosomal subunit protein uS15 from Buchnera aphidicola subsp. Schizaphis graminum (strain Sg).